A 377-amino-acid polypeptide reads, in one-letter code: D-alanine--D-alanine ligase (377 aa).

Residues 137 to 346 (KELMTVNGIR…RSQQAEKLIQ (210 aa)) enclose the ATP-grasp domain. Residue 167–222 (SKQLGEVVFVKAANQGSSVGVSRVTNAEEYENALRDSFQYDEKLLVEKAVESPTEL) participates in ATP binding. Asp-300, Glu-313, and Asn-315 together coordinate Mg(2+).

Belongs to the D-alanine--D-alanine ligase family. Requires Mg(2+) as cofactor. It depends on Mn(2+) as a cofactor.

The protein localises to the cytoplasm. The catalysed reaction is 2 D-alanine + ATP = D-alanyl-D-alanine + ADP + phosphate + H(+). It participates in cell wall biogenesis; peptidoglycan biosynthesis. Functionally, cell wall formation. This chain is D-alanine--D-alanine ligase, found in Oenococcus oeni (strain ATCC BAA-331 / PSU-1).